Reading from the N-terminus, the 166-residue chain is Mitochondrial translation release factor in rescue (166 aa).

The transit peptide at 1–35 (MSTVGLFHFPTPLTRICPAPWGLRLWEKLTLLSPG) directs the protein to the mitochondrion. The tract at residues 57–121 (ENELEEQFVK…LQEKVDVFYN (65 aa)) is GGQ domain. Positions 71–73 (GGQ) match the GGQ motif. Glutamine 73 carries the post-translational modification N5-methylglutamine. The segment at 122-148 (GENSPVHKEKREAAKKKQERKKRAKET) is disordered. Over residues 126-137 (PVHKEKREAAKK) the composition is skewed to basic and acidic residues. Positions 127–160 (VHKEKREAAKKKQERKKRAKETLEKKKLLKELWE) form a coiled coil.

Belongs to the prokaryotic/mitochondrial release factor family. In terms of assembly, interacts (via C-terminus) with MTRES1 (via S4 domain). Associates with mitoribosomal S39 large subunit, peptidyl tRNA and nascent chain. Methylation of glutamine in the GGQ triplet by HEMK1. As to expression, expressed in all areas of the brain tested.

It is found in the mitochondrion. Part of a mitoribosome-associated quality control pathway that prevents aberrant translation by responding to interruptions during elongation. As heterodimer with MTRES1, ejects the unfinished nascent chain and peptidyl transfer RNA (tRNA), respectively, from stalled ribosomes. Recruitment of mitoribosome biogenesis factors to these quality control intermediates suggests additional roles for MTRES1 and MTRF during mitoribosome rescue. This Homo sapiens (Human) protein is Mitochondrial translation release factor in rescue.